Here is a 347-residue protein sequence, read N- to C-terminus: Dihydroorotate dehydrogenase (quinone) (347 aa).

FMN-binding positions include 61–65 (AGLDK) and threonine 85. Position 65 (lysine 65) interacts with substrate. Substrate is bound at residue 110–114 (NRMGF). The FMN site is built by asparagine 138 and asparagine 171. Position 171 (asparagine 171) interacts with substrate. The active-site Nucleophile is serine 174. Asparagine 176 contributes to the substrate binding site. FMN is bound by residues lysine 216 and threonine 244. 245-246 (NT) is a binding site for substrate. Residues glycine 267, glycine 296, and 317–318 (YT) each bind FMN.

Belongs to the dihydroorotate dehydrogenase family. Type 2 subfamily. Monomer. Requires FMN as cofactor.

It localises to the cell membrane. It carries out the reaction (S)-dihydroorotate + a quinone = orotate + a quinol. Its pathway is pyrimidine metabolism; UMP biosynthesis via de novo pathway; orotate from (S)-dihydroorotate (quinone route): step 1/1. Its function is as follows. Catalyzes the conversion of dihydroorotate to orotate with quinone as electron acceptor. The protein is Dihydroorotate dehydrogenase (quinone) of Azotobacter vinelandii (strain DJ / ATCC BAA-1303).